The chain runs to 151 residues: HTH-type transcriptional regulator FL11 (151 aa).

The HTH asnC-type domain maps to 5–66 (LDEIDRRIIK…IVNPEALGYS (62 aa)). A DNA-binding region (H-T-H motif) is located at residues 24 to 43 (LREISKITGLAESTIHERIK). L-arginine is bound at residue 98–104 (ETTGDYD). L-lysine is bound by residues Asn-118, Asp-122, and 133–135 (THT). L-arginine contacts are provided by residues Asp-122 and 133 to 135 (THT).

Homodimer. Binds DNA as a dimer and an octamer.

Its activity is regulated as follows. In the famine mode, FL11 forms dimers and acts as a repressor, leading to growth arrest. In the feast mode, in the presence of high concentrations of lysine or arginine, four dimers assemble into an octamer and cover the fl11 and lysine biosynthesis promoters. This leads to the inhibition of fl11 expression and lysine biosynthesis, decrease of the FL11 concentration in the cell, derepression of the target genes and activation of the metabolism. In terms of biological role, DNA-binding protein involved in the repression of transcription of a large number of genes, thereby arresting growth, in response to environmental changes. In Pyrococcus abyssi (strain GE5 / Orsay), this protein is HTH-type transcriptional regulator FL11.